The following is a 206-amino-acid chain: Large ribosomal subunit protein eL13y (206 aa).

Positions 182 to 206 are disordered; it reads LERTNKRHAGARAKRAADAEKEEKK. Residues 186-195 show a composition bias toward basic residues; that stretch reads NKRHAGARAK. A compositionally biased stretch (basic and acidic residues) spans 196–206; the sequence is RAADAEKEEKK.

It belongs to the eukaryotic ribosomal protein eL13 family.

The sequence is that of Large ribosomal subunit protein eL13y from Brassica napus (Rape).